The chain runs to 329 residues: Malate dehydrogenase (329 aa).

12–18 (GAAGQIG) contacts NAD(+). Substrate is bound by residues R95 and R101. NAD(+) is bound by residues N108, Q115, and 132–134 (VGN). Substrate contacts are provided by N134 and R165. Catalysis depends on H190, which acts as the Proton acceptor.

It belongs to the LDH/MDH superfamily. MDH type 2 family.

It catalyses the reaction (S)-malate + NAD(+) = oxaloacetate + NADH + H(+). Catalyzes the reversible oxidation of malate to oxaloacetate. In Bordetella petrii (strain ATCC BAA-461 / DSM 12804 / CCUG 43448), this protein is Malate dehydrogenase.